A 527-amino-acid polypeptide reads, in one-letter code: Zinc finger protein 35 (527 aa).

The globular domain stretch occupies residues 9-221 (MALAPWGPVK…NPKTQLGQKP (213 aa)). The interval 16–38 (PVKVKKEEEEEENFPGQASSQQV) is disordered. Residues Lys-20, Lys-21, Lys-99, Lys-117, Lys-125, Lys-144, Lys-158, Lys-189, and Lys-214 each participate in a glycyl lysine isopeptide (Lys-Gly) (interchain with G-Cter in SUMO2) cross-link. 2 C2H2-type zinc fingers span residues 222–244 (FTCS…QRIH) and 250–272 (FECH…QRIH). Residue Lys-276 forms a Glycyl lysine isopeptide (Lys-Gly) (interchain with G-Cter in SUMO2) linkage. C2H2-type zinc fingers lie at residues 278 to 300 (YVCS…QKIH), 306 to 328 (FKCN…QKVH), 334 to 356 (YECN…QRIH), 362 to 384 (FACN…QRSH), 390 to 412 (YECK…QRIH), 418 to 440 (YDCS…QRIH), 446 to 468 (YVCN…QRIH), 474 to 496 (YTCN…QRTH), and 502 to 524 (YECE…HRTH).

This sequence belongs to the krueppel C2H2-type zinc-finger protein family.

Its subcellular location is the nucleus. In terms of biological role, may be involved in transcriptional regulation. Involved in cell differentiation and/or proliferation. This chain is Zinc finger protein 35 (ZNF35), found in Homo sapiens (Human).